The sequence spans 187 residues: Threonylcarbamoyl-AMP synthase (187 aa).

Residues 4-187 enclose the YrdC-like domain; sequence TLDLDRAVAT…DARSGQILRD (184 aa).

Belongs to the SUA5 family. TsaC subfamily.

The protein resides in the cytoplasm. It catalyses the reaction L-threonine + hydrogencarbonate + ATP = L-threonylcarbamoyladenylate + diphosphate + H2O. Required for the formation of a threonylcarbamoyl group on adenosine at position 37 (t(6)A37) in tRNAs that read codons beginning with adenine. Catalyzes the conversion of L-threonine, HCO(3)(-)/CO(2) and ATP to give threonylcarbamoyl-AMP (TC-AMP) as the acyladenylate intermediate, with the release of diphosphate. This is Threonylcarbamoyl-AMP synthase from Xanthomonas euvesicatoria pv. vesicatoria (strain 85-10) (Xanthomonas campestris pv. vesicatoria).